A 164-amino-acid chain; its full sequence is uncharacterized protein (164 aa).

Residues 46-66 traverse the membrane as a helical segment; that stretch reads FIRPNIYLIIFIIIVLLLLYY. Positions 72-137 form a coiled coil; the sequence is KADKEKEKLE…YNLNKENLRE (66 aa). The segment covering 76–91 has biased composition (basic and acidic residues); that stretch reads EKEKLEDTDKEFDKST. The tract at residues 76–114 is disordered; the sequence is EKEKLEDTDKEFDKSTNNDTNSKKIYHRQKNSKTLNSSK.

It localises to the membrane. This is an uncharacterized protein from Acanthamoeba polyphaga mimivirus (APMV).